A 61-amino-acid chain; its full sequence is MAVPKRKTSPSKRGMRRSADGLKAPTYVEDKNSGELRRPHHIDLKTGMYRGRQVLTPKESA.

The span at 1–16 (MAVPKRKTSPSKRGMR) shows a compositional bias: basic residues. Residues 1-33 (MAVPKRKTSPSKRGMRRSADGLKAPTYVEDKNS) form a disordered region.

This sequence belongs to the bacterial ribosomal protein bL32 family.

This chain is Large ribosomal subunit protein bL32, found in Allorhizobium ampelinum (strain ATCC BAA-846 / DSM 112012 / S4) (Agrobacterium vitis (strain S4)).